Here is a 221-residue protein sequence, read N- to C-terminus: Ribosomal RNA small subunit methyltransferase G (221 aa).

S-adenosyl-L-methionine is bound by residues G83, F88, 132-133 (LE), and R146.

The protein belongs to the methyltransferase superfamily. RNA methyltransferase RsmG family.

It is found in the cytoplasm. It carries out the reaction guanosine(527) in 16S rRNA + S-adenosyl-L-methionine = N(7)-methylguanosine(527) in 16S rRNA + S-adenosyl-L-homocysteine. Its function is as follows. Specifically methylates the N7 position of guanine in position 527 of 16S rRNA. The protein is Ribosomal RNA small subunit methyltransferase G of Zymomonas mobilis subsp. mobilis (strain ATCC 31821 / ZM4 / CP4).